A 396-amino-acid polypeptide reads, in one-letter code: DNA polymerase interacting tetratricopeptide repeat-containing, protein of 47 kDa (396 aa).

TPR repeat units lie at residues 91–124 (ALNYKEDGNFYMKHKKFRMAIYSFTEGIKTKTDN), 129–162 (AVLYNNRSAAHFFIKNYRSSLSDAQRALFYKPDY), and 163–196 (TKARWRSAQCAYELERFDLCTQMCEELLEVDVDN).

The protein belongs to the TTC4 family. Forms a complex with Hsp83 and Hsp70aa. Interacts with DNApol-alpha180; the interaction inhibits the activity of the DNA polymerase and occurs only in proliferating cells but not in quiescent cells. More abundant in young embryos, pupae and females and a lower level expression seen in late embryos, larvae and males.

It is found in the nucleus. It localises to the nucleoplasm. The protein resides in the cytoplasm. In terms of biological role, may act as a co-chaperone for HSP83. This Drosophila melanogaster (Fruit fly) protein is DNA polymerase interacting tetratricopeptide repeat-containing, protein of 47 kDa (Dpit47).